The primary structure comprises 234 residues: Glucosamine-6-phosphate deaminase (234 aa).

Aspartate 62 (proton acceptor; for enolization step) is an active-site residue. Catalysis depends on asparagine 128, which acts as the For ring-opening step. The active-site Proton acceptor; for ring-opening step is histidine 130. The active-site For ring-opening step is glutamate 135.

The protein belongs to the glucosamine/galactosamine-6-phosphate isomerase family. NagB subfamily.

It catalyses the reaction alpha-D-glucosamine 6-phosphate + H2O = beta-D-fructose 6-phosphate + NH4(+). It functions in the pathway amino-sugar metabolism; N-acetylneuraminate degradation; D-fructose 6-phosphate from N-acetylneuraminate: step 5/5. In terms of biological role, catalyzes the reversible isomerization-deamination of glucosamine 6-phosphate (GlcN6P) to form fructose 6-phosphate (Fru6P) and ammonium ion. This is Glucosamine-6-phosphate deaminase from Streptococcus equi subsp. equi (strain 4047).